Consider the following 455-residue polypeptide: MRNCCRERGFSVGRLEPETSFSCASDVKSSPDMDSVSSQDSLYLPNSIGASLEDQNLWTQFHQEGTEMIITKSGRRMFPQCKIRLFGLHPYTKYMLLVDFVPLDNFRYKWNKNQWEAAGKAEPHPPCRTYVHPDSPASGAHWMKDPICFQKLKLTNNTLDQQGHIILHSMHRYKPRFHVVQSDDMYNSPWGLVQVFSFPETEFTAVTAYQNEKITKLKINHNPFAKGFREQERSHKRDDVLKTLQQSPSKSQKRKKWEDSPEADISDFPKATRIKEESIMDPAGVYQNWVSDHEANQGLTPHSPESEGVNQEQQVPTSSSNFYIKSQYRRSSQHLSSPYDLGEPSSRRLTPDVATVPDSDPDSLAVLHVIPTQNSAQERTCSMNFSMETPMKQPLRGAIYSPYGTEQWMVPAQGPYQPVSYTAYPTDLSAQGAVAHPHSGMSDWSQYSLFPYSCW.

Positions 57 to 230 (LWTQFHQEGT…HNPFAKGFRE (174 aa)) form a DNA-binding region, T-box. The span at 229 to 241 (REQERSHKRDDVL) shows a compositional bias: basic and acidic residues. 2 disordered regions span residues 229–276 (REQE…RIKE) and 295–350 (ANQG…RRLT). Residues 308–326 (GVNQEQQVPTSSSNFYIKS) are compositionally biased toward polar residues.

In terms of assembly, forms a repression complex on the promoters of the nodal/nr1 and siamois genes with the maternal factors tcf7l1/tcf3 and pouf5.1/oct-25. Interacts (via C-terminus) with tcf7l1/tcf3 (via N-terminus). Also interacts with the other POU-domain transcription factors pou5f1.2/oct-91 and pou5f1.3/oct-60. Maternally localized to the vegetal hemisphere of oocytes. Zygotic expression parallels blastopore formation and shifts from dorsal expression in the marginal zone of late blastula and early gastrula stages to a ventral/lateral expression at later stages. During neurula and tailbud stages, expressed in the posterior and anterior ends of the embryo. During tailbud stages, expressed in a subset of interneurons in the neural tube.

It localises to the nucleus. In terms of biological role, transcription factor required for both mesoderm and endoderm formation in the embryo; signaling determinants and concentration levels may determine which germ layer is formed. Acts together with beta-catenin to activate genes that are responsible for mesoderm induction including wnt-8, eomes t/bra, siamois, mix1 and sox17. Directly binds to promoter DNA. Patterns the mesoderm along the dorsoventral and posterior axis. Activates siamois gene transcription when alone or in combination with beta-catenin, but inhibits siamois transcription in combination with pou5f1.1/oct-25. In Xenopus laevis (African clawed frog), this protein is T-box protein VegT-B (vegt-b).